The chain runs to 351 residues: Mannonate dehydratase (351 aa).

This sequence belongs to the mannonate dehydratase family. It depends on Fe(2+) as a cofactor. The cofactor is Mn(2+).

The catalysed reaction is D-mannonate = 2-dehydro-3-deoxy-D-gluconate + H2O. The protein operates within carbohydrate metabolism; pentose and glucuronate interconversion. Its function is as follows. Catalyzes the dehydration of D-mannonate. The sequence is that of Mannonate dehydratase from Clostridium acetobutylicum (strain ATCC 824 / DSM 792 / JCM 1419 / IAM 19013 / LMG 5710 / NBRC 13948 / NRRL B-527 / VKM B-1787 / 2291 / W).